A 126-amino-acid polypeptide reads, in one-letter code: Glycine cleavage system H protein (126 aa).

The region spanning 22–104 is the Lipoyl-binding domain; the sequence is VAYVGITDYA…YGKGWLIKIS (83 aa). Position 63 is an N6-lipoyllysine (Lys63).

It belongs to the GcvH family. In terms of assembly, the glycine cleavage system is composed of four proteins: P, T, L and H. (R)-lipoate is required as a cofactor.

Functionally, the glycine cleavage system catalyzes the degradation of glycine. The H protein shuttles the methylamine group of glycine from the P protein to the T protein. The protein is Glycine cleavage system H protein of Parabacteroides distasonis (strain ATCC 8503 / DSM 20701 / CIP 104284 / JCM 5825 / NCTC 11152).